The chain runs to 227 residues: UPF0173 metal-dependent hydrolase Tlet_1100 (227 aa).

This sequence belongs to the UPF0173 family.

The polypeptide is UPF0173 metal-dependent hydrolase Tlet_1100 (Pseudothermotoga lettingae (strain ATCC BAA-301 / DSM 14385 / NBRC 107922 / TMO) (Thermotoga lettingae)).